Here is a 390-residue protein sequence, read N- to C-terminus: MTIRKMTELNITEKRILIRSDLNVPIENGIIQSDARILAALPTIELALQKKAKVIIMSHLGRPKEGYYTKKYSLFPIFEYFKKKFNNTKIYFSNNFLDGIKLNPGEIALLENTRFNKGELNNDEQLSKKYSDLCDIFVMDAFGSSHRMQSSTYGIGKFVKIACAGLLLISEIDALKKALKKPKRPMVAIVGGSKVSTKFNVLNKLSKIADTIIVGGGIANTFLAIDYKIGKSLYEPDFVFEAKKLRDKYNIIVPIDSRVGKNFCKNEQAIIKSPDNIKEDEEIMDFGDESIKKIISIITQSQTIMWNGPVGVFEFPNFRKGTEMIAKTIANSNAFSIAGGGDTLSVIDMFNIKNNISYISTGGGAFLEFIEGKKLPAIQMLEENFKNKSK.

Substrate contacts are provided by residues 21 to 23, R36, 59 to 62, R114, and R147; these read DLN and HLGR. Residues K198, E314, and 340 to 343 contribute to the ATP site; that span reads GGDT.

Belongs to the phosphoglycerate kinase family. In terms of assembly, monomer.

It is found in the cytoplasm. The catalysed reaction is (2R)-3-phosphoglycerate + ATP = (2R)-3-phospho-glyceroyl phosphate + ADP. The protein operates within carbohydrate degradation; glycolysis; pyruvate from D-glyceraldehyde 3-phosphate: step 2/5. This chain is Phosphoglycerate kinase, found in Buchnera aphidicola subsp. Acyrthosiphon pisum (strain 5A).